The chain runs to 547 residues: Chaperonin GroEL (547 aa).

ATP contacts are provided by residues Thr-30–Pro-33, Lys-51, Asp-87–Thr-91, Gly-416, Asn-480–Ala-482, and Asp-496.

It belongs to the chaperonin (HSP60) family. Forms a cylinder of 14 subunits composed of two heptameric rings stacked back-to-back. Interacts with the co-chaperonin GroES.

The protein localises to the cytoplasm. The enzyme catalyses ATP + H2O + a folded polypeptide = ADP + phosphate + an unfolded polypeptide.. Together with its co-chaperonin GroES, plays an essential role in assisting protein folding. The GroEL-GroES system forms a nano-cage that allows encapsulation of the non-native substrate proteins and provides a physical environment optimized to promote and accelerate protein folding. This Pseudoalteromonas translucida (strain TAC 125) protein is Chaperonin GroEL.